A 236-amino-acid chain; its full sequence is Small ribosomal subunit protein uS3 (236 aa).

A KH type-2 domain is found at 39 to 107; sequence IRLYVLEELK…ETSLNIVEIH (69 aa). The interval 216–236 is disordered; sequence ERRAAEVDHSGSSSNRRRENA.

This sequence belongs to the universal ribosomal protein uS3 family. In terms of assembly, part of the 30S ribosomal subunit. Forms a tight complex with proteins S10 and S14.

In terms of biological role, binds the lower part of the 30S subunit head. Binds mRNA in the 70S ribosome, positioning it for translation. The polypeptide is Small ribosomal subunit protein uS3 (Bartonella henselae (strain ATCC 49882 / DSM 28221 / CCUG 30454 / Houston 1) (Rochalimaea henselae)).